We begin with the raw amino-acid sequence, 401 residues long: Tyrosine--tRNA ligase (401 aa).

Positions 43 to 52 match the 'HIGH' region motif; that stretch reads PTAPDLHLGH. The short motif at 227–231 is the 'KMSKS' region element; sequence KMSKS. K230 is a binding site for ATP. Residues 338-399 form the S4 RNA-binding domain; the sequence is MAIGNVLKEA…GKRRFAKINL (62 aa).

It belongs to the class-I aminoacyl-tRNA synthetase family. TyrS type 2 subfamily. As to quaternary structure, homodimer.

It is found in the cytoplasm. The catalysed reaction is tRNA(Tyr) + L-tyrosine + ATP = L-tyrosyl-tRNA(Tyr) + AMP + diphosphate + H(+). In terms of biological role, catalyzes the attachment of tyrosine to tRNA(Tyr) in a two-step reaction: tyrosine is first activated by ATP to form Tyr-AMP and then transferred to the acceptor end of tRNA(Tyr). The polypeptide is Tyrosine--tRNA ligase (Idiomarina loihiensis (strain ATCC BAA-735 / DSM 15497 / L2-TR)).